Reading from the N-terminus, the 83-residue chain is Arminin 4364 (83 aa).

An N-terminal signal peptide occupies residues 1–18; that stretch reads MKTVFAILFLAFIALTYA. Positions 19 to 55 are excised as a propeptide; sequence RSYEDVKEEIKNEVEKEILEDLEKETDELNERKINDA. Valine amide is present on V80.

This sequence belongs to the arminin family. As to expression, expressed in entodermal epithelium along the body column.

It localises to the secreted. The protein localises to the target cell membrane. In terms of biological role, antimicrobial peptide with a broad-spectrum antimicrobial activity. Keeps its antibacterial activity under a wide range of salt concentrations that mimic physiological conditions of human blood, which is surprising, since Hydra is an obligate freshwater animal with nearly no salt tolerance. Does not affect red blood cells. This chain is Arminin 4364, found in Hydra vulgaris (Hydra).